Consider the following 110-residue polypeptide: Progonadoliberin-2 (110 aa).

The first 26 residues, 1–26, serve as a signal peptide directing secretion; that stretch reads MASIGQGLVLLLLLLLLTAQPGPLKA. A disordered region spans residues 25 to 85; sequence KAQHWSHGWY…KALAPPEDTV (61 aa). Residue G36 is modified to Glycine amide.

The protein belongs to the GnRH family. As to expression, midbrain.

It is found in the secreted. In terms of biological role, stimulates the secretion of gonadotropins; it stimulates the secretion of both luteinizing and follicle-stimulating hormones. The chain is Progonadoliberin-2 (GNRH2) from Suncus murinus (Asian house shrew).